We begin with the raw amino-acid sequence, 372 residues long: N-acetyllactosaminide beta-1,3-N-acetylglucosaminyltransferase 3 (372 aa).

The Cytoplasmic portion of the chain corresponds to Met1–Asn10. A helical; Signal-anchor for type II membrane protein membrane pass occupies residues Ala11–Pro31. The Lumenal portion of the chain corresponds to Pro32–Tyr372. Residues Asn64, Asn184, Asn202, Asn362, and Asn367 are each glycosylated (N-linked (GlcNAc...) asparagine).

The protein belongs to the glycosyltransferase 31 family. In terms of tissue distribution, expressed in colon, jejunum, stomach, esophagus, placenta and trachea.

It localises to the golgi apparatus membrane. It carries out the reaction a 3-O-{beta-D-galactosyl-(1-&gt;3)-[N-acetyl-beta-D-glucosaminyl-(1-&gt;6)]-N-acetyl-alpha-D-galactosaminyl}-L-threonyl-[protein] + UDP-N-acetyl-alpha-D-glucosamine = 3-O-{beta-D-GlcNAc-(1-&gt;3)-beta-D-Gal-(1-&gt;3)-[beta-D-GlcNAc-(1-&gt;6)]-alpha-D-GalNAc}-L-threonyl-[protein] + UDP + H(+). The enzyme catalyses 3-O-{beta-D-galactosyl-(1-&gt;3)-[N-acetyl-beta-D-glucosaminyl-(1-&gt;6)]-N-acetyl-alpha-D-galactosaminyl}-L-seryl-[protein] + UDP-N-acetyl-alpha-D-glucosamine = 3-O-{beta-D-GlcNAc-(1-&gt;3)-beta-D-Gal-(1-&gt;3)-[beta-D-GlcNAc-(1-&gt;6)]-alpha-D-GalNAc}-L-seryl-[protein] + UDP + H(+). The catalysed reaction is a beta-D-galactosyl-(1-&gt;4)-N-acetyl-beta-D-glucosaminyl derivative + UDP-N-acetyl-alpha-D-glucosamine = an N-acetyl-beta-D-glucosaminyl-(1-&gt;3)-beta-D-galactosyl-(1-&gt;4)-N-acetyl-beta-D-glucosaminyl derivative + UDP + H(+). Its pathway is protein modification; protein glycosylation. In terms of biological role, beta-1,3-N-acetylglucosaminyltransferase involved in the synthesis of poly-N-acetyllactosamine. Has activity for type 2 oligosaccharides. Also acts as a core1-1,3-N-acetylglucosaminyltransferase (Core1-beta3GlcNAcT) to form the 6-sulfo sialyl Lewis x on extended core1 O-glycans. This is N-acetyllactosaminide beta-1,3-N-acetylglucosaminyltransferase 3 (B3GNT3) from Homo sapiens (Human).